The primary structure comprises 114 residues: Probable 4-amino-4-deoxy-L-arabinose-phosphoundecaprenol flippase subunit ArnE (114 aa).

3 consecutive transmembrane segments (helical) span residues 41-61 (MWLW…LLVL), 64-84 (MDVG…TLVG), and 91-111 (PVDP…FQLG).

It belongs to the ArnE family. As to quaternary structure, heterodimer of ArnE and ArnF.

The protein resides in the cell inner membrane. Its pathway is bacterial outer membrane biogenesis; lipopolysaccharide biosynthesis. Translocates 4-amino-4-deoxy-L-arabinose-phosphoundecaprenol (alpha-L-Ara4N-phosphoundecaprenol) from the cytoplasmic to the periplasmic side of the inner membrane. This Pseudomonas savastanoi pv. phaseolicola (strain 1448A / Race 6) (Pseudomonas syringae pv. phaseolicola (strain 1448A / Race 6)) protein is Probable 4-amino-4-deoxy-L-arabinose-phosphoundecaprenol flippase subunit ArnE.